A 188-amino-acid chain; its full sequence is GMP synthase [glutamine-hydrolyzing] subunit A (188 aa).

In terms of domain architecture, Glutamine amidotransferase type-1 spans M1–E188. Residue C76 is the Nucleophile of the active site. Catalysis depends on residues H163 and E165.

As to quaternary structure, heterodimer composed of a glutamine amidotransferase subunit (A) and a GMP-binding subunit (B).

The enzyme catalyses XMP + L-glutamine + ATP + H2O = GMP + L-glutamate + AMP + diphosphate + 2 H(+). It participates in purine metabolism; GMP biosynthesis; GMP from XMP (L-Gln route): step 1/1. Catalyzes the synthesis of GMP from XMP. The polypeptide is GMP synthase [glutamine-hydrolyzing] subunit A (Methanocaldococcus jannaschii (strain ATCC 43067 / DSM 2661 / JAL-1 / JCM 10045 / NBRC 100440) (Methanococcus jannaschii)).